We begin with the raw amino-acid sequence, 745 residues long: Elongation factor G, mitochondrial (745 aa).

A tr-type G domain is found at 40–317 (ERIRNIGISA…AVLDYLPNPG (278 aa)). Residues 49 to 56 (AHIDSGKT), 116 to 120 (DTPGH), and 170 to 173 (NKLD) contribute to the GTP site.

It belongs to the TRAFAC class translation factor GTPase superfamily. Classic translation factor GTPase family. EF-G/EF-2 subfamily.

Its subcellular location is the mitochondrion. It participates in protein biosynthesis; polypeptide chain elongation. Mitochondrial GTPase that catalyzes the GTP-dependent ribosomal translocation step during translation elongation. During this step, the ribosome changes from the pre-translocational (PRE) to the post-translocational (POST) state as the newly formed A-site-bound peptidyl-tRNA and P-site-bound deacylated tRNA move to the P and E sites, respectively. Catalyzes the coordinated movement of the two tRNA molecules, the mRNA and conformational changes in the ribosome. Essential during development as it acts as a retrograde signal from mitochondria to the nucleus to slow down cell proliferation if mitochondrial energy output is low. The polypeptide is Elongation factor G, mitochondrial (Drosophila erecta (Fruit fly)).